A 491-amino-acid polypeptide reads, in one-letter code: Alpha-2-antiplasmin (491 aa).

The first 27 residues, 1–27 (MALLRGLLVLSLSCLQGPCFTFSPVSA), serve as a signal peptide directing secretion. Positions 28-39 (VDLPGQQPVSEQ) are excised as a propeptide. The cysteines at positions 70 and 143 are disulfide-linked. 4 N-linked (GlcNAc...) asparagine glycosylation sites follow: N126, N295, N309, and N316. A disordered region spans residues 439–491 (SALPQLQEQRDSPDNRLIGQNDKADFHGGKTFGPDLKLAPRMEEDYPQFSSPK). Sulfotyrosine is present on Y484.

It belongs to the serpin family. Forms protease inhibiting heterodimer with TMPRSS7. Post-translationally, proteolytically cleaved at Pro-35 by both the prolyl endopeptidase FAP form and antiplasmin-cleaving enzyme FAP soluble form to generate mature alpha-2-antiplasmin. As to expression, expressed by the liver and secreted in plasma.

It is found in the secreted. Its function is as follows. Serine protease inhibitor. The major targets of this inhibitor are plasmin and trypsin, but it also inactivates matriptase-3/TMPRSS7 and chymotrypsin. This chain is Alpha-2-antiplasmin (Serpinf2), found in Mus musculus (Mouse).